Here is a 288-residue protein sequence, read N- to C-terminus: Acetyl-coenzyme A carboxylase carboxyl transferase subunit beta (288 aa).

The 255-residue stretch at 34 to 288 (LWVKCSRCNE…ANILSLHGTN (255 aa)) folds into the CoA carboxyltransferase N-terminal domain. Zn(2+) is bound by residues C38, C41, C57, and C60. The C4-type zinc finger occupies 38–60 (CSRCNEILYTKELDKNFKVCHKC).

Belongs to the AccD/PCCB family. In terms of assembly, acetyl-CoA carboxylase is a heterohexamer composed of biotin carboxyl carrier protein (AccB), biotin carboxylase (AccC) and two subunits each of ACCase subunit alpha (AccA) and ACCase subunit beta (AccD). The cofactor is Zn(2+).

Its subcellular location is the cytoplasm. The enzyme catalyses N(6)-carboxybiotinyl-L-lysyl-[protein] + acetyl-CoA = N(6)-biotinyl-L-lysyl-[protein] + malonyl-CoA. The protein operates within lipid metabolism; malonyl-CoA biosynthesis; malonyl-CoA from acetyl-CoA: step 1/1. In terms of biological role, component of the acetyl coenzyme A carboxylase (ACC) complex. Biotin carboxylase (BC) catalyzes the carboxylation of biotin on its carrier protein (BCCP) and then the CO(2) group is transferred by the transcarboxylase to acetyl-CoA to form malonyl-CoA. The protein is Acetyl-coenzyme A carboxylase carboxyl transferase subunit beta of Desulforamulus reducens (strain ATCC BAA-1160 / DSM 100696 / MI-1) (Desulfotomaculum reducens).